The sequence spans 405 residues: Elongation factor Tu (405 aa).

The region spanning 10–215 is the tr-type G domain; the sequence is KPHVNIGTIG…AVDSYIPTPE (206 aa). The tract at residues 19-26 is G1; it reads GHVDHGKT. 19–26 is a GTP binding site; it reads GHVDHGKT. Mg(2+) is bound at residue threonine 26. A G2 region spans residues 61–65; that stretch reads GITIN. The tract at residues 82 to 85 is G3; it reads DCPG. Residues 82-86 and 137-140 each bind GTP; these read DCPGH and NKVD. Residues 137-140 form a G4 region; it reads NKVD. The segment at 175-177 is G5; sequence SAL.

This sequence belongs to the TRAFAC class translation factor GTPase superfamily. Classic translation factor GTPase family. EF-Tu/EF-1A subfamily. As to quaternary structure, monomer.

The protein localises to the cytoplasm. It catalyses the reaction GTP + H2O = GDP + phosphate + H(+). In terms of biological role, GTP hydrolase that promotes the GTP-dependent binding of aminoacyl-tRNA to the A-site of ribosomes during protein biosynthesis. This Deinococcus radiodurans (strain ATCC 13939 / DSM 20539 / JCM 16871 / CCUG 27074 / LMG 4051 / NBRC 15346 / NCIMB 9279 / VKM B-1422 / R1) protein is Elongation factor Tu.